The chain runs to 710 residues: Denticleless protein homolog A (710 aa).

WD repeat units follow at residues 47 to 89, 96 to 135, and 138 to 178; these read GMPV…MQRL, AHTN…LIGE, and GHQC…KDGF. The short motif at 168–171 is the DDB1-binding motif element; it reads WDTR. The Nuclear localization signal motif lies at 197-204; it reads PSKMKKRK. 4 WD repeats span residues 215-254, 270-309, 314-355, and 359-398; these read DSQQ…SAYR, TRKL…TDPV, GHQN…AAPV, and GHCQ…CEDS. The DDB1-binding motif signature appears at 244–247; it reads WDLR. 2 disordered regions span residues 428–534 and 652–698; these read GKPS…VSSA and ALGH…PGSM. The segment covering 430–450 has biased composition (low complexity); sequence PSVMSSSSLTSSPTPASCAPS. Polar residues-rich tracts occupy residues 504–516 and 659–690; these read TPKS…TKTP and SSPQ…SPVS.

The protein belongs to the WD repeat cdt2 family. As to quaternary structure, component of the DCX(DTL) E3 ubiquitin ligase complex, at least composed of cul4 (cul4a or cul4b), ddb1, dtl/cdt2 and rbx1.

Its subcellular location is the nucleus. The protein localises to the cytoplasm. It is found in the cytoskeleton. It localises to the microtubule organizing center. The protein resides in the centrosome. Its subcellular location is the chromosome. It functions in the pathway protein modification; protein ubiquitination. In terms of biological role, substrate-specific adapter of a DCX (DDB1-CUL4-X-box) E3 ubiquitin-protein ligase complex required for cell cycle control, DNA damage response and translesion DNA synthesis. The DCX(DTL) complex, also named CRL4(CDT2) complex, mediates the polyubiquitination and subsequent degradation of CDT1, CDKN1A/p21(CIP1), KMT5A and SDE2. CDT1 degradation in response to DNA damage is necessary to ensure proper cell cycle regulation of DNA replication. CDKN1A/p21(CIP1) degradation during S phase or following UV irradiation is essential to control replication licensing. KMT5A degradation is also important for a proper regulation of mechanisms such as TGF-beta signaling, cell cycle progression, DNA repair and cell migration. Most substrates require their interaction with PCNA for their polyubiquitination: substrates interact with PCNA via their PIP-box, and those containing the 'K+4' motif in the PIP box, recruit the DCX(DTL) complex, leading to their degradation. In undamaged proliferating cells, the DCX(DTL) complex also promotes the 'Lys-164' monoubiquitination of PCNA, thereby being involved in PCNA-dependent translesion DNA synthesis. May play a role in the regulation of the circadian clock. This chain is Denticleless protein homolog A (dtl-a), found in Xenopus laevis (African clawed frog).